The chain runs to 170 residues: Small ribosomal subunit protein uS4 (170 aa).

The S4 RNA-binding domain occupies 100–164 (RRLQTVVYRE…SDLTDELHPA (65 aa)).

Belongs to the universal ribosomal protein uS4 family. As to quaternary structure, part of the 30S ribosomal subunit. Contacts protein S5. The interaction surface between S4 and S5 is involved in control of translational fidelity.

Its function is as follows. One of the primary rRNA binding proteins, it binds directly to 16S rRNA where it nucleates assembly of the body of the 30S subunit. With S5 and S12 plays an important role in translational accuracy. This Halobacterium salinarum (strain ATCC 29341 / DSM 671 / R1) protein is Small ribosomal subunit protein uS4.